A 462-amino-acid polypeptide reads, in one-letter code: Ubiquitin carboxyl-terminal hydrolase calypso (462 aa).

One can recognise a UCH catalytic domain in the interval 29–260 (GWLELESDPG…IRFNLMAVVP (232 aa)). Cys115 serves as the catalytic Nucleophile. His197 (proton donor) is an active-site residue. In terms of domain architecture, ULD spans 357 to 385 (NYDKFICTFLTMLAHQGVLGELVSQHLLP). The positively charged C-terminal tail required for binding nucleosomes stretch occupies residues 387–462 (KKISGQSAAN…KGRNKCRKRK (76 aa)). The tract at residues 394-462 (AANRLNKQNS…KGRNKCRKRK (69 aa)) is disordered. A compositionally biased stretch (low complexity) spans 399 to 447 (NKQNSAAASTANSSAGATAGGAKSQQQQQQQQQPQQPQTPKNGKSPGKT). The span at 448 to 462 (PGRRRKGRNKCRKRK) shows a compositional bias: basic residues.

It belongs to the peptidase C12 family. BAP1 subfamily. In terms of assembly, catalytic component of the polycomb repressive deubiquitinase (PR-DUB) complex, at least composed of caly/calypso, Asx and sba (MBD5/6 homolog). The PR-DUB complex associates with nucleosomes to mediate deubiquitination of histone H2AK118ub1 substrates; the association requires the positively charged C-terminal tail of caly, probably due to direct binding of DNA. Interacts (via ULD domain) with Asx (via DEUBAD domain); the interaction produces a stable heterodimer with a composite binding site for ubiquitin. Homodimerizes (via coiled-coil hinge-region between the UCH and ULD domains) to mediate assembly of 2 copies of the caly-Asx heterodimer into a bisymmetric tetramer; dimerization enhances PR-DUB association with nucleosomes.

The protein localises to the nucleus. It carries out the reaction Thiol-dependent hydrolysis of ester, thioester, amide, peptide and isopeptide bonds formed by the C-terminal Gly of ubiquitin (a 76-residue protein attached to proteins as an intracellular targeting signal).. Catalytic component of the polycomb repressive deubiquitinase (PR-DUB) complex, a complex that specifically mediates deubiquitination of histone H2A monoubiquitinated at 'Lys-119' (H2AK118ub1). Mediates bisymmetric organization of the PR-DUB complex and is involved in association with nucleosomes to mediate deubiquitination. Does not deubiquitinate monoubiquitinated histone H2B. Required to maintain the transcriptionally repressive state of homeotic genes throughout development. The PR-DUB complex has weak or no activity toward 'Lys-48'- and 'Lys-63'-linked polyubiquitin chains. Polycomb group (PcG) protein. The sequence is that of Ubiquitin carboxyl-terminal hydrolase calypso from Drosophila virilis (Fruit fly).